A 130-amino-acid polypeptide reads, in one-letter code: Holin-like protein CidA (130 aa).

4 consecutive transmembrane segments (helical) span residues 6–26 (FVIK…IGTE), 31–51 (LHIP…LLQF), 65–85 (FLLK…MDVA), and 93–113 (ILFF…SGYI).

Belongs to the CidA/LrgA family. CidA subfamily.

Its subcellular location is the cell membrane. Functionally, increases the activity of extracellular murein hydrolases possibly by mediating their export via hole formation. Inhibited by the antiholin-like proteins LrgAB. In an unstressed cell, the LrgAB products probably inhibit the function of the CidAB proteins. When a cell is stressed by the addition of antibiotics or by other factors in the environment, the CidAB proteins possibly oligomerize within the bacterial cell membrane, creating lesions that disrupt the proton motive force, which in turn results in loss of cell viability. These lesions are also hypothesized to regulate the subsequent cell lysis by either allowing the murein hydrolases access to the cell wall substrate and/or regulating their activity by a possible change in the cell wall pH that results from loss of membrane potential. This Staphylococcus epidermidis (strain ATCC 35984 / DSM 28319 / BCRC 17069 / CCUG 31568 / BM 3577 / RP62A) protein is Holin-like protein CidA.